The following is a 1932-amino-acid chain: DOCK-like protein 1 (1932 aa).

Residues leucine 1410 to serine 1824 form the DOCKER domain. The segment covering serine 1908–aspartate 1921 has biased composition (polar residues). The segment at serine 1908–glycine 1932 is disordered. Residues serine 1922–glycine 1932 show a composition bias toward basic and acidic residues.

It belongs to the DOCK family. Forms an active heterodimer with LMO1.

It localises to the cytoplasm. It is found in the mitochondrion. In terms of biological role, forms a transiant heterodimeric complex with LMO1, that acts as a guanine nucleotide exchange factor exchange factor (GEF) for the small GTPase RHO5. DCK1, LMO1 and RHO5 relocate to mitochondria upon oxidative stress and trigger cell death. The DCK1/LMO1/RHO5 signaling module mediates mitochondrial turnover under nitrogen starvation conditions via mitophagy. The DCK1/LMO1/RHO5 signaling module plays also a function in cell wall integrity signaling. The polypeptide is DOCK-like protein 1 (Saccharomyces cerevisiae (strain ATCC 204508 / S288c) (Baker's yeast)).